The chain runs to 56 residues: Photosystem II assembly protein Psb34 (56 aa).

Topologically, residues 1–33 are cytoplasmic; that stretch reads MRYTTDEGGRLNNFAIEPKVYQAQPWTPQQKVR. A helical transmembrane segment spans residues 34-54; sequence AALLVGGGLLLVAGLVAIAVG. Residues 55 to 56 are Extracellular-facing; it reads VS.

Part of photosystem II (PSII) assembly intermediate complex PSII-I; crystallized from a strain without psbJ, it forms monomeric PSII before addition of the oxygen evolving complex. PSII-I includes 3 assembly factors not found in mature PSII (Psb27, Psb28 and Psb34). The N-terminus of Psb34 (this protein) binds to CP47 (psbB) in close proximity to PsbH on the cytoplasmic face of PSII.

It is found in the cellular thylakoid membrane. Its function is as follows. Involved in photosystem II (PSII) assembly and/or repair, probably in conversion of late PSII assembly intermediates into mature dimeric PSII. In Thermosynechococcus vestitus (strain NIES-2133 / IAM M-273 / BP-1), this protein is Photosystem II assembly protein Psb34.